The sequence spans 302 residues: MSVFIDKNTKVMVQGITGSTALFHTKQMLDYGTQIVAGVTPGKGGQVVEGVPVYNTVEEAKNETGANVSVVYVPAPFAADSIIEAADADLDMVICITEHIPVVDMVKVKRYLQGRKTRLVGPNCPGVITADECKIGIMPGYIHKKGHVGVVSRSGTLTYEAVHQLTEEGIGQTTAVGIGGDPVNGTNFIDVLKAFNEDSETKAVVMIGEIGGTAEEEAAQWIKENMNKPVIGFIGGQTAPPGKRMGHAGAIISGGKGTASEKIKTLNDCGVETADTPSEIGTTLIDAAKKAGIYEELLTIKK.

Residues 17–20 (TGST), K43, and 96–98 (ITE) each bind CoA. Y159 is a binding site for substrate. The Tele-phosphohistidine intermediate role is filled by H247.

This sequence belongs to the succinate/malate CoA ligase alpha subunit family. Heterotetramer of two alpha and two beta subunits.

It catalyses the reaction succinate + ATP + CoA = succinyl-CoA + ADP + phosphate. The enzyme catalyses GTP + succinate + CoA = succinyl-CoA + GDP + phosphate. The protein operates within carbohydrate metabolism; tricarboxylic acid cycle; succinate from succinyl-CoA (ligase route): step 1/1. In terms of biological role, succinyl-CoA synthetase functions in the citric acid cycle (TCA), coupling the hydrolysis of succinyl-CoA to the synthesis of either ATP or GTP and thus represents the only step of substrate-level phosphorylation in the TCA. The alpha subunit of the enzyme binds the substrates coenzyme A and phosphate, while succinate binding and nucleotide specificity is provided by the beta subunit. This Staphylococcus epidermidis (strain ATCC 12228 / FDA PCI 1200) protein is Succinate--CoA ligase [ADP-forming] subunit alpha.